The chain runs to 145 residues: Mannitol-specific phosphotransferase enzyme IIA component (145 aa).

The 144-residue stretch at 2–145 (ENLTNISIEL…EEITENLAIA (144 aa)) folds into the PTS EIIA type-2 domain. Histidine 62 (tele-phosphohistidine intermediate) is an active-site residue. The residue at position 62 (histidine 62) is a Phosphohistidine; by HPr.

The protein localises to the cytoplasm. The phosphoenolpyruvate-dependent sugar phosphotransferase system (sugar PTS), a major carbohydrate active transport system, catalyzes the phosphorylation of incoming sugar substrates concomitantly with their translocation across the cell membrane. The enzyme II CmtAB PTS system is involved in D-mannitol transport. The protein is Mannitol-specific phosphotransferase enzyme IIA component of Enterococcus faecalis (strain ATCC 700802 / V583).